Here is a 213-residue protein sequence, read N- to C-terminus: Thiamine-phosphate synthase (213 aa).

Residues 38 to 42 and Asp-70 each bind 4-amino-2-methyl-5-(diphosphooxymethyl)pyrimidine; that span reads QLREK. Residues Asp-71 and Glu-90 each coordinate Mg(2+). Ser-109 is a 4-amino-2-methyl-5-(diphosphooxymethyl)pyrimidine binding site. Residue 135 to 137 coordinates 2-[(2R,5Z)-2-carboxy-4-methylthiazol-5(2H)-ylidene]ethyl phosphate; it reads TQT. Position 138 (Lys-138) interacts with 4-amino-2-methyl-5-(diphosphooxymethyl)pyrimidine. 2-[(2R,5Z)-2-carboxy-4-methylthiazol-5(2H)-ylidene]ethyl phosphate-binding positions include Gly-165 and 185–186; that span reads VS.

It belongs to the thiamine-phosphate synthase family. Requires Mg(2+) as cofactor.

The catalysed reaction is 2-[(2R,5Z)-2-carboxy-4-methylthiazol-5(2H)-ylidene]ethyl phosphate + 4-amino-2-methyl-5-(diphosphooxymethyl)pyrimidine + 2 H(+) = thiamine phosphate + CO2 + diphosphate. It carries out the reaction 2-(2-carboxy-4-methylthiazol-5-yl)ethyl phosphate + 4-amino-2-methyl-5-(diphosphooxymethyl)pyrimidine + 2 H(+) = thiamine phosphate + CO2 + diphosphate. The enzyme catalyses 4-methyl-5-(2-phosphooxyethyl)-thiazole + 4-amino-2-methyl-5-(diphosphooxymethyl)pyrimidine + H(+) = thiamine phosphate + diphosphate. It functions in the pathway cofactor biosynthesis; thiamine diphosphate biosynthesis; thiamine phosphate from 4-amino-2-methyl-5-diphosphomethylpyrimidine and 4-methyl-5-(2-phosphoethyl)-thiazole: step 1/1. Functionally, condenses 4-methyl-5-(beta-hydroxyethyl)thiazole monophosphate (THZ-P) and 2-methyl-4-amino-5-hydroxymethyl pyrimidine pyrophosphate (HMP-PP) to form thiamine monophosphate (TMP). The chain is Thiamine-phosphate synthase from Lacticaseibacillus paracasei (strain ATCC 334 / BCRC 17002 / CCUG 31169 / CIP 107868 / KCTC 3260 / NRRL B-441) (Lactobacillus paracasei).